Consider the following 559-residue polypeptide: SH3 domain-binding protein 2 (559 aa).

One can recognise a PH domain in the interval 26-130; it reads GVAKAGYLHK…WMAFVRREIG (105 aa). Positions 164–449 are disordered; that stretch reads LSSYPMDNED…EDSDEDYEKV (286 aa). The segment covering 170–184 has biased composition (acidic residues); it reads DNEDYEHEDEDDSYL. Phosphotyrosine; by SYK is present on residues Tyr174 and Tyr183. The short motif at 201 to 210 is the SH3-binding element; that stretch reads PPAYPPPPVP. Composition is skewed to pro residues over residues 202–213 and 233–242; these read PAYPPPPVPVPR and PLLPPPPPKR. The segment covering 252–265 has biased composition (basic and acidic residues); that stretch reads EDAKDALGLRRVEP. A Phosphoserine modification is found at Ser277. Low complexity predominate over residues 313-327; the sequence is TSSVSSSTTMAVATS. The segment covering 360–371 has biased composition (basic and acidic residues); the sequence is KIAEEPSPREAA. Over residues 375–386 the composition is skewed to pro residues; sequence PVPPVAPRPPVQ. A phosphoserine mark is found at Ser414 and Ser425. Positions 437-446 are enriched in acidic residues; it reads TGEEDSDEDY. Residue Tyr446 is modified to Phosphotyrosine; by SYK. An SH2 domain is found at 455–553; that stretch reads VFVNTTESCE…HQSLLLRHPY (99 aa).

Post-translationally, phosphorylated. Phosphorylation at Tyr-446 may stimulate the activity of the LYN kinase.

In terms of biological role, binds differentially to the SH3 domains of certain proteins of signal transduction pathways. Binds to phosphatidylinositols; linking the hemopoietic tyrosine kinase fes to the cytoplasmic membrane in a phosphorylation dependent mechanism. This Mus musculus (Mouse) protein is SH3 domain-binding protein 2 (Sh3bp2).